The chain runs to 273 residues: Peroxiredoxin-4 (273 aa).

The first 40 residues, 1–40 (METWSKLLDGTTPSRRWRKLVLLLPPLLLFLLQTEALQGL), serve as a signal peptide directing secretion. The region spanning 81 to 239 (AKISKPAPYW…TLRLVQAFQY (159 aa)) is the Thioredoxin domain. Catalysis depends on Cys-126, which acts as the Cysteine sulfenic acid (-SOH) intermediate.

Belongs to the peroxiredoxin family. AhpC/Prx1 subfamily. Homodimer; disulfide-linked, upon oxidation. 5 homodimers assemble to form a ring-like decamer. Post-translationally, the enzyme can be inactivated by further oxidation of the cysteine sulfenic acid (C(P)-SOH) to sulphinic acid (C(P)-SO2H) and sulphonic acid (C(P)-SO3H) instead of its condensation to a disulfide bond.

It localises to the cytoplasm. The protein resides in the endoplasmic reticulum. It is found in the secreted. The enzyme catalyses a hydroperoxide + [thioredoxin]-dithiol = an alcohol + [thioredoxin]-disulfide + H2O. Functionally, thiol-specific peroxidase that catalyzes the reduction of hydrogen peroxide and organic hydroperoxides to water and alcohols, respectively. Plays a role in cell protection against oxidative stress by detoxifying peroxides and as sensor of hydrogen peroxide-mediated signaling events. Regulates the activation of NF-kappa-B in the cytosol by a modulation of I-kappa-B-alpha phosphorylation. The chain is Peroxiredoxin-4 (Prdx4) from Rattus norvegicus (Rat).